The sequence spans 455 residues: Dihydrolipoyllysine-residue succinyltransferase component of 2-oxoglutarate dehydrogenase complex, mitochondrial (455 aa).

Residues 1-68 (MLSRSRCVSR…RFFRTTAVCK (68 aa)) constitute a mitochondrion transit peptide. The Lipoyl-binding domain maps to 71-145 (VITVKTPAFA…EGGTPLFTLR (75 aa)). S82 is modified (phosphoserine). K111 carries the post-translational modification N6-lipoyllysine. The span at 153–173 (KAKPAEAPAAAAPKAEPAVSA) shows a compositional bias: low complexity. Positions 153–214 (KAKPAEAPAA…KPTAAPPVAE (62 aa)) are disordered. N6-acetyllysine is present on K155. Residues 174 to 195 (VPPPPAASIPTQMPPVPSPPQP) show a composition bias toward pro residues. A catalytic region spans residues 221-453 (LRAEHREKMN…AVEDPRVLLL (233 aa)). N6-acetyllysine is present on residues K269, K274, K275, K279, and K309. Catalysis depends on residues H426 and D430.

The protein belongs to the 2-oxoacid dehydrogenase family. The 2-oxoglutarate dehydrogenase complex is composed of OGDH (2-oxoglutarate dehydrogenase; E1), DLST (dihydrolipoamide succinyltransferase; E2), DLD (dihydrolipoamide dehydrogenase; E3) and the assembly factor KGD4. It contains multiple copies of the three enzymatic components (E1, E2 and E3). In the nucleus, the 2-oxoglutarate dehydrogenase complex associates with KAT2A. Interacts with ABHD11; this interaction maintains the functional lipoylation of the 2-oxoglutarate dehydrogenase complex. (R)-lipoate is required as a cofactor.

The protein resides in the mitochondrion matrix. The protein localises to the nucleus. It carries out the reaction N(6)-[(R)-dihydrolipoyl]-L-lysyl-[protein] + succinyl-CoA = N(6)-[(R)-S(8)-succinyldihydrolipoyl]-L-lysyl-[protein] + CoA. Its pathway is amino-acid degradation; L-lysine degradation via saccharopine pathway; glutaryl-CoA from L-lysine: step 6/6. The protein operates within carbohydrate metabolism; tricarboxylic acid cycle. Functionally, dihydrolipoamide succinyltransferase (E2) component of the 2-oxoglutarate dehydrogenase complex. The 2-oxoglutarate dehydrogenase complex catalyzes the overall conversion of 2-oxoglutarate to succinyl-CoA and CO(2). The 2-oxoglutarate dehydrogenase complex is mainly active in the mitochondrion. A fraction of the 2-oxoglutarate dehydrogenase complex also localizes in the nucleus and is required for lysine succinylation of histones: associates with KAT2A on chromatin and provides succinyl-CoA to histone succinyltransferase KAT2A. This is Dihydrolipoyllysine-residue succinyltransferase component of 2-oxoglutarate dehydrogenase complex, mitochondrial from Sus scrofa (Pig).